A 162-amino-acid chain; its full sequence is NADH-quinone oxidoreductase subunit I (162 aa).

4Fe-4S ferredoxin-type domains lie at 53–83 and 93–122; these read LRRYPNGEERCIACKLCEAVCPAMAITIESE and TRYDIDLTKCIFCGFCEESCPVDSIVETHI. The [4Fe-4S] cluster site is built by Cys63, Cys66, Cys69, Cys73, Cys102, Cys105, Cys108, and Cys112.

The protein belongs to the complex I 23 kDa subunit family. As to quaternary structure, NDH-1 is composed of 14 different subunits. Subunits NuoA, H, J, K, L, M, N constitute the membrane sector of the complex. [4Fe-4S] cluster is required as a cofactor.

The protein resides in the cell inner membrane. The enzyme catalyses a quinone + NADH + 5 H(+)(in) = a quinol + NAD(+) + 4 H(+)(out). NDH-1 shuttles electrons from NADH, via FMN and iron-sulfur (Fe-S) centers, to quinones in the respiratory chain. The immediate electron acceptor for the enzyme in this species is believed to be ubiquinone. Couples the redox reaction to proton translocation (for every two electrons transferred, four hydrogen ions are translocated across the cytoplasmic membrane), and thus conserves the redox energy in a proton gradient. This Herminiimonas arsenicoxydans protein is NADH-quinone oxidoreductase subunit I.